The following is a 345-amino-acid chain: Eukaryotic translation initiation factor 3 subunit F (345 aa).

The MPN domain maps to 30–166 (VVIQPQALFS…TRAYISAPVG (137 aa)). Residues 308-345 (GGESGSTESGQRGGQRGGKGGRGGQQRNQERSGEEVRA) form a disordered region. Residues 318–331 (QRGGQRGGKGGRGG) show a composition bias toward gly residues. The span at 335-345 (NQERSGEEVRA) shows a compositional bias: basic and acidic residues.

The protein belongs to the eIF-3 subunit F family. In terms of assembly, component of the eukaryotic translation initiation factor 3 (eIF-3) complex.

Its subcellular location is the cytoplasm. Component of the eukaryotic translation initiation factor 3 (eIF-3) complex, which is involved in protein synthesis of a specialized repertoire of mRNAs and, together with other initiation factors, stimulates binding of mRNA and methionyl-tRNAi to the 40S ribosome. The eIF-3 complex specifically targets and initiates translation of a subset of mRNAs involved in cell proliferation. This chain is Eukaryotic translation initiation factor 3 subunit F, found in Aspergillus terreus (strain NIH 2624 / FGSC A1156).